Reading from the N-terminus, the 319-residue chain is Protein SODIUM POTASSIUM ROOT DEFECTIVE 1 (319 aa).

Residues 1–13 show a composition bias toward polar residues; sequence MLCASQASTTTLC. 2 disordered regions span residues 1 to 113 and 191 to 248; these read MLCA…TPQG and SPDN…NSSS. Positions 14–27 are enriched in low complexity; the sequence is STMDQTSQPSSSSS. The segment covering 36–49 has biased composition (basic and acidic residues); the sequence is AIDRHNPIIRDGRR. The span at 58–67 shows a compositional bias: low complexity; the sequence is LNPSSSSSST. 2 stretches are compositionally biased toward polar residues: residues 104 to 113 and 200 to 210; these read SCFSSDTPQG and TKASPTASLSS. Residues 224–242 are compositionally biased toward pro residues; that stretch reads SPPPPPPPSPPQSSPPSPP. The 67-residue stretch at 249 to 315 folds into the HMA domain; the sequence is DQVVVLRVSL…KVKNAQFWPE (67 aa). Residues cysteine 260 and cysteine 263 each coordinate Zn(2+).

As to quaternary structure, interacts with FT, but not with TSF (TWIN SISTER OF FT). As to expression, expressed in vascular tissues of cotyledons, rosette leaves and roots in developing seedlings before and during the floral transition. Expressed specifically in the phloem companion cells. Not detected in embryos or seeds. Not detected in the vegetative shoot apex.

It is found in the cytoplasm. Its subcellular location is the nucleus. It localises to the endoplasmic reticulum. In terms of biological role, required for root meristem maintenance after germination. Involved in phloem translocation, starch accumulation and flowering. Promotes flowering in the photoperiod pathway. Regulates long-distance movement of FT from leaves to the shoot apex through the phloem stream. The chain is Protein SODIUM POTASSIUM ROOT DEFECTIVE 1 from Arabidopsis thaliana (Mouse-ear cress).